The following is a 449-amino-acid chain: Glycoprotein endo-alpha-1,2-mannosidase (449 aa).

The Cytoplasmic portion of the chain corresponds to 1-8 (MIRFRRRT). Residues 9–29 (CITLSIFIFLVCLIMAGLKHL) traverse the membrane as a helical; Signal-anchor for type II membrane protein segment. The Lumenal segment spans residues 30–449 (RPENAAFGSP…YMKEKEHWLV (420 aa)). A catalytic region spans residues 59-449 (DSENHLKGNT…YMKEKEHWLV (391 aa)).

It belongs to the glycosyl hydrolase 99 family.

The protein resides in the golgi apparatus membrane. The catalysed reaction is N-{alpha-Glc-(1-&gt;3)-alpha-Man-(1-&gt;2)-alpha-Man-(1-&gt;2)-alpha-Man-(1-&gt;3)-[alpha-Man-(1-&gt;2)-alpha-Man-(1-&gt;3)-[alpha-Man-(1-&gt;2)-alpha-Man-(1-&gt;6)]-alpha-Man-(1-&gt;6)]-beta-Man-(1-&gt;4)-beta-GlcNAc-(1-&gt;4)-beta-GlcNAc}-L-asparaginyl-[protein] + H2O = alpha-D-glucosyl-(1-&gt;3)-D-mannopyranose + N(4)-{alpha-D-Man-(1-&gt;2)-alpha-D-Man-(1-&gt;3)-[alpha-D-Man-(1-&gt;2)-alpha-D-Man-(1-&gt;3)-[alpha-D-Man-(1-&gt;2)-alpha-D-Man-(1-&gt;6)]-alpha-D-Man-(1-&gt;6)]-beta-D-Man-(1-&gt;4)-beta-D-GlaNAc-(1-&gt;4)-beta-D-GlcNAc}-L-asparaginyl-[protein] (N-glucan mannose isomer 8A1,2,3B1,2). The sequence is that of Glycoprotein endo-alpha-1,2-mannosidase (manea) from Xenopus laevis (African clawed frog).